The sequence spans 124 residues: Small ribosomal subunit protein uS12 (124 aa).

A 3-methylthioaspartic acid modification is found at Asp-89.

Belongs to the universal ribosomal protein uS12 family. Part of the 30S ribosomal subunit. Contacts proteins S8 and S17. May interact with IF1 in the 30S initiation complex.

Its function is as follows. With S4 and S5 plays an important role in translational accuracy. Interacts with and stabilizes bases of the 16S rRNA that are involved in tRNA selection in the A site and with the mRNA backbone. Located at the interface of the 30S and 50S subunits, it traverses the body of the 30S subunit contacting proteins on the other side and probably holding the rRNA structure together. The combined cluster of proteins S8, S12 and S17 appears to hold together the shoulder and platform of the 30S subunit. This Vibrio campbellii (strain ATCC BAA-1116) protein is Small ribosomal subunit protein uS12.